A 618-amino-acid polypeptide reads, in one-letter code: Glutathione-regulated potassium-efflux system protein (618 aa).

12 consecutive transmembrane segments (helical) span residues 6–26 (NPEL…VPLF), 32–52 (GSVL…FGIV), 55–75 (PTAV…IIGL), 94–114 (LLQV…LLGL), 118–138 (VSFI…MQSL), 152–172 (VIST…SVAF), 186–206 (WVSI…GKWL), 227–247 (ALLV…SMAM), 274–294 (GLLL…HLVF), 298–318 (ILLL…VYII), 336–356 (MAHG…AEVI), and 362–382 (ATFT…AQIA). Residues 409–525 (EDNVLVIGFG…LIKQDVDFIV (117 aa)) enclose the RCK N-terminal domain.

Belongs to the monovalent cation:proton antiporter 2 (CPA2) transporter (TC 2.A.37) family.

The protein resides in the cell inner membrane. Its function is as follows. Transport system that facilitate potassium-efflux, possibly by potassium-proton antiport. In Haemophilus influenzae (strain ATCC 51907 / DSM 11121 / KW20 / Rd), this protein is Glutathione-regulated potassium-efflux system protein (kefBC).